The following is a 70-amino-acid chain: ATP synthase subunit c (70 aa).

2 helical membrane passes run 3 to 23 and 47 to 67; these read FIAA…GNGM and FIGV…AFML.

It belongs to the ATPase C chain family. As to quaternary structure, F-type ATPases have 2 components, F(1) - the catalytic core - and F(0) - the membrane proton channel. F(1) has five subunits: alpha(3), beta(3), gamma(1), delta(1), epsilon(1). F(0) has three main subunits: a(1), b(2) and c(10-14). The alpha and beta chains form an alternating ring which encloses part of the gamma chain. F(1) is attached to F(0) by a central stalk formed by the gamma and epsilon chains, while a peripheral stalk is formed by the delta and b chains.

Its subcellular location is the cell membrane. In terms of biological role, f(1)F(0) ATP synthase produces ATP from ADP in the presence of a proton or sodium gradient. F-type ATPases consist of two structural domains, F(1) containing the extramembraneous catalytic core and F(0) containing the membrane proton channel, linked together by a central stalk and a peripheral stalk. During catalysis, ATP synthesis in the catalytic domain of F(1) is coupled via a rotary mechanism of the central stalk subunits to proton translocation. Key component of the F(0) channel; it plays a direct role in translocation across the membrane. A homomeric c-ring of between 10-14 subunits forms the central stalk rotor element with the F(1) delta and epsilon subunits. This is ATP synthase subunit c from Lacticaseibacillus casei (strain BL23) (Lactobacillus casei).